The sequence spans 339 residues: Caspase drICE (339 aa).

Residues 1–28 (MDATNNGESADQVGIRVGNPEQPNDHTD) constitute a propeptide that is removed on maturation. Residues 1-45 (MDATNNGESADQVGIRVGNPEQPNDHTDALGSVGSGGAGSSGLVA) are disordered. Catalysis depends on residues histidine 169 and cysteine 211. Positions 218 to 230 (GGVTMQRSQTETD) are excised as a propeptide.

The protein belongs to the peptidase C14A family. In terms of assembly, heterotetramer that consists of two anti-parallel arranged heterodimers, each one formed by a 21 kDa (p21) and a 12 kDa (p12) subunit. Inactive pro-form can homodimerize. Dronc and Drice can form a stable complex. Interacts with Diap2 (via BIR3 domain) to form a stable complex. May interact with some isoforms of Dark.

Its activity is regulated as follows. Zymogen activated by proteolytic cleavage; cleaved by the initiator caspase Dronc upon apoptosis induction. Functionally, involved in the activation cascade of caspases responsible for apoptosis execution. Acts downstream of rpr. Cleaves baculovirus p35 and lamin DmO in vitro. The chain is Caspase drICE (Drice) from Drosophila melanogaster (Fruit fly).